A 315-amino-acid polypeptide reads, in one-letter code: MTHIYKKLGAAFFALLLIAALAACGNNSESKGSASDSKGAETFTYKAENGNVKIPKHPKRVVVMADGYYGYFKTLGINVVGAPENVFKNPYYKGKTNGVENIGDGTSVEKVIDLNPDLIIVWTTQGADIKKLEKIAPTVAVKYDKLDNIEQLKEFAKMTGTEDKAEKWLAKWDKKVAAAKTKIKKAVGDKTISIMQTNGKDIYVFGKDFGRGGSIIYKDLGLQATKLTKEKAIDQGPGYTSISLEKLPDFAGDYIFAGPWQSGGDDGGVFESSIWKNLNAVKNGHVYKMDPIGFYFTDPISLEGQLEFITESLTK.

A signal peptide spans 1-23 (MTHIYKKLGAAFFALLLIAALAA). A lipid anchor (N-palmitoyl cysteine) is attached at cysteine 24. The S-diacylglycerol cysteine moiety is linked to residue cysteine 24. Residues 60-315 (RVVVMADGYY…LEFITESLTK (256 aa)) enclose the Fe/B12 periplasmic-binding domain.

This sequence belongs to the bacterial solute-binding protein 8 family. In terms of assembly, the complex is composed of an ATP-binding protein (FhuC), two transmembrane proteins (FhuB and FhuG) and a solute-binding protein (FhuD or YxeB).

The protein resides in the cell membrane. It localises to the membrane raft. Part of the ABC transporter complex FhuCBGD involved in iron(3+)-hydroxamate import. Binds the iron(3+)-hydroxamate complex and transfers it to the membrane-bound permease. Required for the transport of ferrichrome and coprogen. This chain is Iron(3+)-hydroxamate-binding protein FhuD (fhuD), found in Bacillus subtilis (strain 168).